A 340-amino-acid chain; its full sequence is Methionine import ATP-binding protein MetN (340 aa).

The 240-residue stretch at 6-245 (IEFEGITKVF…PQTNVAKRFV (240 aa)) folds into the ABC transporter domain. 42 to 49 (GYSGAGKS) lines the ATP pocket.

Belongs to the ABC transporter superfamily. Methionine importer (TC 3.A.1.24) family. In terms of assembly, the complex is composed of two ATP-binding proteins (MetN), two transmembrane proteins (MetI) and a solute-binding protein (MetQ).

It localises to the cell membrane. It catalyses the reaction L-methionine(out) + ATP + H2O = L-methionine(in) + ADP + phosphate + H(+). The enzyme catalyses D-methionine(out) + ATP + H2O = D-methionine(in) + ADP + phosphate + H(+). Its function is as follows. Part of the ABC transporter complex MetNIQ involved in methionine import. Responsible for energy coupling to the transport system. This is Methionine import ATP-binding protein MetN from Corynebacterium diphtheriae (strain ATCC 700971 / NCTC 13129 / Biotype gravis).